The sequence spans 483 residues: MSHNQFDKKSQAWSALFSEPMSDLVKRYTASVFFDKRLWQADIAGSLAHADMLAAQKIISSEDHNAIQSGMATISAEIESGAFDWKLELEDVHLNIEARLTQLIGLAGKRLHTGRSRNDQVATDVRLWLRGEIDLIGALLTDLQKALLEVAEKNVEVILPGFTHLQVAQPISFGHHMLAYVEMFSRDAERMSEVRRRTNRLPLGAAALAGTSYPLDRERVAVSLGMVDEKGHPCVCQNSLDAVSDRDFAIEFTAAASLCMVHISRMSEELILWMSQNFGFIKIADRFTTGSSIMPQKKNPDVPELARGKTGRVVGHLMGLITLMKGQPLAYNKDNQEDKEPLFDTVDTLKDTLRIFAEMIGGQLNPATGIKEGGISVNPQAMEQAALKGYATATDLADYLVKKGLPFRDAHETVAHAVKAAITHQVDLSELPLAVLQQFNPGIEKDVYEVLSLRGSLNARDILGGTAPNQVRAQIARHRARLG.

This sequence belongs to the lyase 1 family. Argininosuccinate lyase subfamily.

It localises to the cytoplasm. It catalyses the reaction 2-(N(omega)-L-arginino)succinate = fumarate + L-arginine. It participates in amino-acid biosynthesis; L-arginine biosynthesis; L-arginine from L-ornithine and carbamoyl phosphate: step 3/3. This chain is Argininosuccinate lyase, found in Albidiferax ferrireducens (strain ATCC BAA-621 / DSM 15236 / T118) (Rhodoferax ferrireducens).